Here is a 202-residue protein sequence, read N- to C-terminus: Small ribosomal subunit protein uS4c (202 aa).

The region spanning 90-152 (MRLDNLIFRL…AASKSLVNTY (63 aa)) is the S4 RNA-binding domain.

The protein belongs to the universal ribosomal protein uS4 family. As to quaternary structure, part of the 30S ribosomal subunit. Contacts protein S5. The interaction surface between S4 and S5 is involved in control of translational fidelity.

It is found in the plastid. Its subcellular location is the chloroplast. In terms of biological role, one of the primary rRNA binding proteins, it binds directly to 16S rRNA where it nucleates assembly of the body of the 30S subunit. With S5 and S12 plays an important role in translational accuracy. The sequence is that of Small ribosomal subunit protein uS4c (rps4) from Emiliania huxleyi (Coccolithophore).